The primary structure comprises 441 residues: UDP-N-acetylglucosamine--N-acetylmuramyl-(pentapeptide) pyrophosphoryl-undecaprenol N-acetylglucosamine transferase (441 aa).

Residues 28–30 (TGG), Asn140, Arg176, Ser204, Ile257, and Gln302 each bind UDP-N-acetyl-alpha-D-glucosamine.

The protein belongs to the glycosyltransferase 28 family. MurG subfamily.

The protein localises to the cell inner membrane. It carries out the reaction di-trans,octa-cis-undecaprenyl diphospho-N-acetyl-alpha-D-muramoyl-L-alanyl-D-glutamyl-meso-2,6-diaminopimeloyl-D-alanyl-D-alanine + UDP-N-acetyl-alpha-D-glucosamine = di-trans,octa-cis-undecaprenyl diphospho-[N-acetyl-alpha-D-glucosaminyl-(1-&gt;4)]-N-acetyl-alpha-D-muramoyl-L-alanyl-D-glutamyl-meso-2,6-diaminopimeloyl-D-alanyl-D-alanine + UDP + H(+). Its pathway is cell wall biogenesis; peptidoglycan biosynthesis. In terms of biological role, cell wall formation. Catalyzes the transfer of a GlcNAc subunit on undecaprenyl-pyrophosphoryl-MurNAc-pentapeptide (lipid intermediate I) to form undecaprenyl-pyrophosphoryl-MurNAc-(pentapeptide)GlcNAc (lipid intermediate II). This chain is UDP-N-acetylglucosamine--N-acetylmuramyl-(pentapeptide) pyrophosphoryl-undecaprenol N-acetylglucosamine transferase, found in Xanthomonas oryzae pv. oryzae (strain MAFF 311018).